The following is a 202-amino-acid chain: MRRKNGFSVASVFILCSIAQMTCEEFELENTESLVECVQCVQLWRSASAKEGKVCTSGATTCKGNACFMRQCKHCPVYQYMSGCVNFSPWQLADLEMNRRTSELRMRRVGAVLLCEDTFNQTTCVCNRRDKCNDIHSRLPFATYAEGLFRGVVNFDTIIAAIDPRYLEVMSGYHFRFLASSSSSFSSFLPSIAIILFFVLSH.

A signal peptide spans 1 to 19; sequence MRRKNGFSVASVFILCSIA. The chain crosses the membrane as a helical span at residues 177-199; sequence FLASSSSSFSSFLPSIAIILFFV.

The protein localises to the membrane. This is an uncharacterized protein from Caenorhabditis elegans.